The primary structure comprises 499 residues: Membrane-associated tyrosine- and threonine-specific cdc2-inhibitory kinase (499 aa).

Met1 is modified (N-acetylmethionine). Positions Met1–Pro29 are disordered. Positions Gly16 to Val28 are enriched in pro residues. Thr17 carries the phosphothreonine modification. Ser40 bears the Phosphoserine mark. Residues Lys42–Pro72 are disordered. 2 positions are modified to phosphoserine: Ser94 and Ser120. Positions Phe110 to Leu359 constitute a Protein kinase domain. ATP is bound by residues Leu116–Val124 and Lys139. Residues Ser143 and Ser160 each carry the phosphoserine modification. The Proton acceptor role is filled by Asp233. Mg(2+)-binding residues include Asn238, Asp251, and Gly253. Positions Leu382–Ala398 match the Membrane-association motif motif. An interaction with PIN1 region spans residues Ala398 to Thr499. Ser426 bears the Phosphoserine; by PLK1 mark. The interval Gly437–Thr499 is interaction with CDC2-CCNB1. The interval Gly451–Pro485 is disordered. 3 positions are modified to phosphoserine: Ser469, Ser473, and Ser482. Thr495 bears the Phosphothreonine; by PLK1 mark.

This sequence belongs to the protein kinase superfamily. Ser/Thr protein kinase family. WEE1 subfamily. Interacts with CDC2-CCNB1 complex. Can also interact with PIN1 when phosphorylated by CDC2-CCNB1. Autophosphorylated. Phosphorylated by CDC2-CCNB1 complexes on undefined serine and threonine residues. The phosphorylation by CDC2-CCNB1 complexes may inhibit the catalytic activity.

The protein localises to the endoplasmic reticulum membrane. Its subcellular location is the golgi apparatus membrane. The catalysed reaction is L-seryl-[protein] + ATP = O-phospho-L-seryl-[protein] + ADP + H(+). It carries out the reaction L-threonyl-[protein] + ATP = O-phospho-L-threonyl-[protein] + ADP + H(+). Its activity is regulated as follows. Negatively regulated by hyperphosphorylation during mitosis. The hyperphosphorylated form does not associate with CCNB1-CDC2 complexes. The PLK1 protein kinase may be required for mitotic phosphorylation. Acts as a negative regulator of entry into mitosis (G2 to M transition) by phosphorylation of the CDK1 kinase specifically when CDK1 is complexed to cyclins. Mediates phosphorylation of CDK1 predominantly on 'Thr-14'. Also involved in Golgi fragmentation. May be involved in phosphorylation of CDK1 on 'Tyr-15' to a lesser degree, however tyrosine kinase activity is unclear and may be indirect. This is Membrane-associated tyrosine- and threonine-specific cdc2-inhibitory kinase (PKMYT1) from Homo sapiens (Human).